A 1655-amino-acid chain; its full sequence is Protein scribble homolog (1655 aa).

The segment at 1-818 (MLKCIPLWRC…MRVWRERMVE (818 aa)) is sufficient for targeting to adherens junction and to inhibit cell proliferation. Position 37 is a phosphoserine (serine 37). LRR repeat units follow at residues 37 to 58 (SLEELLLDANQLRELPKPFFRL), 60 to 81 (NLRKLGLSDNEIQRLPPEVANF), 83 to 104 (QLVELDVSRNDIPEIPESIKFC), 106 to 127 (ALEIADFSGNPLSRLPDGFTQL), 129 to 150 (SLAHLALNDVSLQALPGDVGNL), 152 to 174 (NLVTLELRENLLKSLPASLSFLV), 175 to 197 (KLEQLDLGGNDLEVLPDTLGALP), 198 to 219 (NLRELWLDRNQLSALPPELGNL), 221 to 243 (RLVCLDVSENRLEELPAELGGLV), 244 to 265 (LLTDLLLSQNLLRRLPDGIGQL), 267 to 288 (QLSILKVDQNRLCEVTEAIGDC), 290 to 312 (NLSELILTENLLMALPRSLGKLT), 313 to 334 (KLTNLNVDRNHLEALPPEIGGC), 336 to 357 (ALSVLSLRDNRLAVLPPELAHT), 359 to 381 (ELHVLDVAGNRLQSLPFALTHLN), and 382 to 402 (LKALWLAENQAQPMLRFQTED). Threonine 378 carries the phosphothreonine modification. Disordered regions lie at residues 417-440 (PQQPPPSLEDAGQQGSLSETWSDA), 459-606 (DAEE…IRKD), and 628-702 (LLQG…VSAP). Residues 458–474 (EDAEEAAAEKRGLQRRA) are a coiled coil. At threonine 475 the chain carries Phosphothreonine. The segment covering 479–494 (SELKVMKRSIEGRRSE) has biased composition (basic and acidic residues). Position 504 is a phosphoserine (serine 504). The span at 537 to 555 (EGPSAEAQGGSQQEATTAG) shows a compositional bias: low complexity. Acidic residues-rich tracts occupy residues 556 to 565 (GEEDAEEDYQ) and 660 to 694 (EEEEEEEGSPQEEEEEEEEENRAEEEEASTEEEDK). Positions 656 to 701 (RAQKEEEEEEEGSPQEEEEEEEEENRAEEEEASTEEEDKEGAVVSA) form a coiled coil. The residue at position 688 (serine 688) is a Phosphoserine. Position 689 is a phosphothreonine (threonine 689). Residues serine 708 and serine 764 each carry the phosphoserine modification. The interaction with ARHGEF7 stretch occupies residues 717–1229 (IEPARIEEEE…SLESISSIDR (513 aa)). Positions 728-815 (TLTILRQTGG…AVQMRVWRER (88 aa)) constitute a PDZ 1 domain. Positions 728–1194 (TLTILRQTGG…TVLVCDGFEA (467 aa)) are required for interaction with VIM. Residue threonine 826 is modified to Phosphothreonine. The interval 827 to 853 (PLRPEDDYSPRERRGGGLRLPLLPPES) is disordered. Over residues 829–841 (RPEDDYSPRERRG) the composition is skewed to basic and acidic residues. A phosphoserine mark is found at serine 835, serine 853, serine 875, and serine 939. PDZ domains lie at 862 to 950 (VACL…EREA), 1004 to 1093 (EIRL…RRDP), and 1100 to 1194 (ELCI…GFEA). Residues 1105–1117 (KAPGERLGISIRG) form an interaction with tick-borne encephalitis virus RNA-directed RNA polymerase NS5 region. 11 positions are modified to phosphoserine: serine 1140, serine 1220, serine 1223, serine 1226, serine 1232, serine 1276, serine 1279, serine 1295, serine 1298, serine 1306, and serine 1309. Over residues 1227-1242 (IDRELSPEGPGKEKEL) the composition is skewed to basic and acidic residues. A disordered region spans residues 1227 to 1246 (IDRELSPEGPGKEKELPGQT). A disordered region spans residues 1277 to 1489 (AGSVQRVPSG…APERALSPAE (213 aa)). Residues 1302-1311 (QQPPSPPSPD) show a composition bias toward pro residues. Threonine 1342 is modified (phosphothreonine). A Phosphoserine modification is found at serine 1348. Over residues 1353–1365 (SFRERQKYFELEV) the composition is skewed to basic and acidic residues. Phosphoserine is present on serine 1378. Residues 1379–1419 (LVGADDLRKMQEEEARKLQQKRAQMLREAAEAGAEARLALD) are a coiled coil. Positions 1383 to 1395 (DDLRKMQEEEARK) are enriched in basic and acidic residues. Over residues 1409–1421 (EAGAEARLALDGE) the composition is skewed to low complexity. Positions 1422–1432 (TLGEEEQEDEQ) are enriched in acidic residues. Phosphoserine is present on residues serine 1437, serine 1445, and serine 1448. Residues 1461–1472 (AKAERRHQERLR) show a composition bias toward basic and acidic residues. Serine 1475, serine 1486, and serine 1508 each carry phosphoserine. A disordered region spans residues 1520-1568 (LSRSQEGRGTRGPLERLAEAPSPAPTPSPTPVEDLGPQTSTSPGRLPLS). Residues 1524-1537 (QEGRGTRGPLERLA) are compositionally biased toward basic and acidic residues. The residue at position 1541 (serine 1541) is a Phosphoserine. Threonine 1545 carries the post-translational modification Phosphothreonine. 3 positions are modified to phosphoserine: serine 1547, serine 1561, and serine 1591. The interval 1622 to 1655 (GRPSPGAVGPEDVALCSSRRPVRPGRRGLGPVPS) is disordered.

It belongs to the LAP (LRR and PDZ) protein family. In terms of assembly, interacts with UBE3A. Interacts with PAK1 and PAK2. Interacts (via PDZ domains) with VANGL2. Interacts (via PDZ domains) with LPP and TRIP6; the interaction is direct. Interacts (via PDZ domains) with TJP2. Interacts (via PDZ domains) with APC; may mediate APC targeting to adherens junctions of epithelial cells. Interacts (via PDZ domains) with TSHR; regulates TSHR trafficking and function. Interacts with ARHGEF7 and GIT1; interacts directly with ARHGEF7. Interacts with CTNNB1. Interacts with MAPK12. Interacts (via PDZ domains 1 and 3) with MCC. Interacts with DLG5. Interacts with STK4/MST1 and LATS1 in the presence of DLG5. Interacts (via PDZ domain 3) with CRTAM (via PDZ-binding motif); the interaction promotes CRTAM and SCRIB polarization in a subset of CD4+ T-cells. Interacts with YES1, when YES1 is in a closed conformation; the interaction facilitates YES1 autophosphorylation. Interacts (via PDZ domains) with VIM; the interaction protects SCRIB from proteasomal degradation and facilitates SCRIB localization to intermediate filaments, the interaction is reduced by cell contact inhibition. (Microbial infection) Interacts (via fourth PDZ domain) with tick-borne encephalitis virus RNA-directed RNA polymerase NS5; this interaction targets viral NS5 to the cell membrane periphery and nucleus and prevents STAT1 phosphorylation, and thus, the activation of the JAK-STAT signaling pathway. Interacts with HPV E6. Interacts with influenza A virus protein NS1; the interaction results in the translocation of SCRIB from the cell membrane to perinuclear puncta. Ubiquitinated; targeted for UBE3A-dependent multiubiquitination in the presence of high-risk HPV E6 proteins and degraded. Post-translationally, palmitoylated. Could be depalmitoylated by LYPLA1 and/or LYPLA2. Palmitoylation of SCRIB by ZDHHC7 is required for its localization to cell-cell junctions, function in the establishement of epithelial cell polarity and the regulation of downstream signaling pathways important for epithelial cell differentiation. Expressed in kidney, skeletal muscles, liver, lung, breast, intestine, placenta and skin mainly in epithelial cells (at protein level).

It localises to the cell membrane. It is found in the cell junction. Its subcellular location is the adherens junction. The protein localises to the cell projection. The protein resides in the lamellipodium. It localises to the cytoplasm. It is found in the postsynapse. Its subcellular location is the presynapse. Scaffold protein involved in different aspects of polarized cell differentiation regulating epithelial and neuronal morphogenesis and T-cell polarization. Via its interaction with CRTAM, required for the late phase polarization of a subset of CD4+ T-cells, which in turn regulates TCR-mediated proliferation and IFNG and IL22 production. Plays a role in cell directional movement, cell orientation, cell sheet organization and Golgi complex polarization at the cell migration front. Promotes epithelial cell layer barrier function via maintaining cell-cell adhesion. Most probably functions in the establishment of apico-basal cell polarity. May function in cell proliferation regulating progression from G1 to S phase and as a positive regulator of apoptosis for instance during acinar morphogenesis of the mammary epithelium. May regulate cell invasion via MAPK-mediated cell migration and adhesion. May play a role in exocytosis and in the targeting of synaptic vesicles to synapses. Functions as an activator of Rac GTPase activity. In Homo sapiens (Human), this protein is Protein scribble homolog.